Consider the following 240-residue polypeptide: MANYDSNECVVCMEEKPLVVFEPCMHHNCCESCSGHVSNCPYCRADITGVYLEASVKVKLEPCEHIVKLIKITEKKCSTCDQDTTGMVIVDGKLTKTFKAENYRNAARLKNIIAMLIKAAKARNNRPGFFRKMKFGIPSVFTNYIHLDSCVICKKEIKEEVGKTYMHACCTATICKPCAKAILKAMVEKEITENLPFCPYCFTKTPIKYGLNAEGELLDPPSDSFSYYYVNEYMKMINNQ.

The segment at 9–44 (CVVCMEEKPLVVFEPCMHHNCCESCSGHVSNCPYCR) adopts an RING-type 1 zinc-finger fold. The RING-type 2; degenerate zinc-finger motif lies at 150 to 202 (CVICKKEIKEEVGKTYMHACCTATICKPCAKAILKAMVEKEITENLPFCPYCF).

This chain is Putative RING finger protein ORF96, found in Ostreid herpesvirus 1 (isolate France) (OsHV-1).